A 513-amino-acid polypeptide reads, in one-letter code: ATP synthase subunit alpha (513 aa).

169-176 contacts ATP; sequence GDRQIGKS.

Belongs to the ATPase alpha/beta chains family. As to quaternary structure, F-type ATPases have 2 components, CF(1) - the catalytic core - and CF(0) - the membrane proton channel. CF(1) has five subunits: alpha(3), beta(3), gamma(1), delta(1), epsilon(1). CF(0) has three main subunits: a(1), b(2) and c(9-12). The alpha and beta chains form an alternating ring which encloses part of the gamma chain. CF(1) is attached to CF(0) by a central stalk formed by the gamma and epsilon chains, while a peripheral stalk is formed by the delta and b chains.

The protein resides in the cell inner membrane. The enzyme catalyses ATP + H2O + 4 H(+)(in) = ADP + phosphate + 5 H(+)(out). Functionally, produces ATP from ADP in the presence of a proton gradient across the membrane. The alpha chain is a regulatory subunit. The polypeptide is ATP synthase subunit alpha (Colwellia psychrerythraea (strain 34H / ATCC BAA-681) (Vibrio psychroerythus)).